Reading from the N-terminus, the 872-residue chain is TATA box-binding protein-associated factor RNA polymerase I subunit B (872 aa).

The segment at E6–D40 adopts an RRN7-type zinc-finger fold. Residues C15, C18, C32, and C35 each contribute to the Zn(2+) site. Residues Q41–T72 are B-reader. The tract at residues E73–E84 is B-linker. An N-terminal cyclin fold region spans residues F85–K312. Residues D187 to L206 form a disordered region.

The protein belongs to the RRN7/TAF1B family.

The protein resides in the nucleus. It is found in the nucleolus. In terms of biological role, component of RNA polymerase I core factor complex that acts as a GTF2B/TFIIB-like factor and plays a key role in multiple steps during transcription initiation such as pre-initiation complex (PIC) assembly and postpolymerase recruitment events in polymerase I (Pol I) transcription. Binds rDNA promoters and plays a role in Pol I recruitment. The sequence is that of TATA box-binding protein-associated factor RNA polymerase I subunit B from Drosophila melanogaster (Fruit fly).